Consider the following 456-residue polypeptide: Alcohol acyltransferase 16 (456 aa).

Active-site proton acceptor residues include His167 and Asp382.

This sequence belongs to the plant acyltransferase family. As to expression, expressed in fruit.

The catalysed reaction is 3-(methylsulfanyl)propanoyl-CoA + butan-1-ol = butyl 3-(methylsulfanyl)propanoate + CoA. It catalyses the reaction ethanol + benzoyl-CoA = ethyl benzoate + CoA. The enzyme catalyses butan-1-ol + benzoyl-CoA = butyl benzoate + CoA. It carries out the reaction 2-(methylsulfanyl)acetyl-CoA + butan-1-ol = butyl 2-(methylsulfanyl)acetate + CoA. Involved in the biosynthesis of volatile esters which confer kiwifruit flavor. Alcohol acyl transferase that can use a wide range of alcohols as substrate to produce esters. Exhibits benzoyl-CoA:alcohol O-acyltransferase activity. This Actinidia chinensis var. chinensis (Chinese soft-hair kiwi) protein is Alcohol acyltransferase 16.